We begin with the raw amino-acid sequence, 356 residues long: S-adenosylmethionine:tRNA ribosyltransferase-isomerase (356 aa).

The protein belongs to the QueA family. In terms of assembly, monomer.

The protein resides in the cytoplasm. The catalysed reaction is 7-aminomethyl-7-carbaguanosine(34) in tRNA + S-adenosyl-L-methionine = epoxyqueuosine(34) in tRNA + adenine + L-methionine + 2 H(+). The protein operates within tRNA modification; tRNA-queuosine biosynthesis. Transfers and isomerizes the ribose moiety from AdoMet to the 7-aminomethyl group of 7-deazaguanine (preQ1-tRNA) to give epoxyqueuosine (oQ-tRNA). This is S-adenosylmethionine:tRNA ribosyltransferase-isomerase from Enterobacter sp. (strain 638).